We begin with the raw amino-acid sequence, 910 residues long: DNA mismatch repair protein MutS (910 aa).

Over residues 1–15 (MPRSAAQSEEQTLQG) the composition is skewed to polar residues. Residues 1–94 (MPRSAAQSEE…EPAWAHHSQV (94 aa)) form a disordered region. The span at 44-54 (DASLSADAAAR) shows a compositional bias: low complexity. 726–733 (GPNASGKS) provides a ligand contact to ATP.

The protein belongs to the DNA mismatch repair MutS family.

In terms of biological role, this protein is involved in the repair of mismatches in DNA. It is possible that it carries out the mismatch recognition step. This protein has a weak ATPase activity. In Synechococcus sp. (strain WH7803), this protein is DNA mismatch repair protein MutS.